Reading from the N-terminus, the 554-residue chain is Inactive serine/threonine-protein kinase/endoribonuclease IRE1-like (554 aa).

The signal sequence occupies residues 1-17; sequence MWLLAISLVGLLVVVVC. The segment at 36–85 is disordered; the sequence is KRDKNSAPRVSASGEDGTKNEQVEKKSDPSGGLGEENEKTNSESKVLSVP. Over residues 51 to 63 the composition is skewed to basic and acidic residues; sequence DGTKNEQVEKKSD. The 288-residue stretch at 121–408 folds into the Protein kinase domain; sequence LVSTNEMKYG…ATQVLLHPLF (288 aa). Lysine 150 is a binding site for ATP. The 144-residue stretch at 411–554 folds into the KEN domain; that stretch reads SEKRLFFLRE…GEEAFEKYFN (144 aa).

The protein belongs to the protein kinase superfamily. Ser/Thr protein kinase family.

In Arabidopsis thaliana (Mouse-ear cress), this protein is Inactive serine/threonine-protein kinase/endoribonuclease IRE1-like.